The sequence spans 141 residues: uncharacterized protein (141 aa).

This is an uncharacterized protein from Arabidopsis thaliana (Mouse-ear cress).